The following is a 177-amino-acid chain: Phycocyanin-645 beta chain (177 aa).

Y18 serves as a coordination point for mesobiliverdin. Residues K28, N35, and D39 each coordinate (2R,3E)-phycocyanobilin. The 15,16-dihydrobiliverdin site is built by C50, D54, and C61. Positions 77, 82, 84, and 85 each coordinate (2R,3E)-phycocyanobilin. Q148 serves as a coordination point for 15,16-dihydrobiliverdin. (2R,3E)-phycocyanobilin is bound by residues P154, G156, and C158.

It belongs to the phycobiliprotein family. Heterotetramer of 2 different alpha chains and 2 identical beta chains which form 2 alpha-beta heterodimers within the heterotetramer. Post-translationally, contains two phycocyanobilin chromophores, one mesobiliverdin chromophore and one 15,16-dihydrobiliverdin chromophore with binding mediated by both the alpha and beta subunits.

The protein localises to the plastid. It is found in the chloroplast thylakoid membrane. In terms of biological role, light-harvesting photosynthetic tetrapyrrole chromophore-protein from the phycobiliprotein complex. In Chroomonas sp, this protein is Phycocyanin-645 beta chain.